A 519-amino-acid polypeptide reads, in one-letter code: Exodeoxyribonuclease 7 large subunit (519 aa).

The interval 500–519 is disordered; sequence VGRGKTRKPKEEPPAQGSLL.

It belongs to the XseA family. As to quaternary structure, heterooligomer composed of large and small subunits.

It is found in the cytoplasm. The enzyme catalyses Exonucleolytic cleavage in either 5'- to 3'- or 3'- to 5'-direction to yield nucleoside 5'-phosphates.. Its function is as follows. Bidirectionally degrades single-stranded DNA into large acid-insoluble oligonucleotides, which are then degraded further into small acid-soluble oligonucleotides. This Cereibacter sphaeroides (strain ATCC 17029 / ATH 2.4.9) (Rhodobacter sphaeroides) protein is Exodeoxyribonuclease 7 large subunit.